We begin with the raw amino-acid sequence, 247 residues long: TM2 domain-containing protein 3 (247 aa).

Residues 1–29 (MAGGVLPLRGLRALCRVLLFLSQFCILSG) form the signal peptide. Topologically, residues 30–179 (GEQSQALAQS…RTFPKMLYCN (150 aa)) are extracellular. N-linked (GlcNAc...) asparagine glycans are attached at residues N87, N122, N140, N157, N169, and N179. A helical transmembrane segment spans residues 180 to 200 (WTGGYKWSTALALSITLGGFG). The TM2 domain occupies 183-230 (GYKWSTALALSITLGGFGADRFYLGQWREGLGKLFSFGGLGIWTLIDV). Topologically, residues 201-215 (ADRFYLGQWREGLGK) are cytoplasmic. The chain crosses the membrane as a helical span at residues 216–236 (LFSFGGLGIWTLIDVLLIGVG). Residues 237 to 247 (YVGPADGSLYI) are Extracellular-facing.

It belongs to the TM2 family. In terms of tissue distribution, widely expressed.

The protein resides in the membrane. Probable positive regulator of Notch signaling. The sequence is that of TM2 domain-containing protein 3 (TM2D3) from Homo sapiens (Human).